Here is a 346-residue protein sequence, read N- to C-terminus: N-acetyl-gamma-glutamyl-phosphate reductase (346 aa).

Cys-150 is an active-site residue.

It belongs to the NAGSA dehydrogenase family. Type 1 subfamily.

It localises to the cytoplasm. The catalysed reaction is N-acetyl-L-glutamate 5-semialdehyde + phosphate + NADP(+) = N-acetyl-L-glutamyl 5-phosphate + NADPH + H(+). It participates in amino-acid biosynthesis; L-arginine biosynthesis; N(2)-acetyl-L-ornithine from L-glutamate: step 3/4. Functionally, catalyzes the NADPH-dependent reduction of N-acetyl-5-glutamyl phosphate to yield N-acetyl-L-glutamate 5-semialdehyde. The polypeptide is N-acetyl-gamma-glutamyl-phosphate reductase (Lachnoclostridium phytofermentans (strain ATCC 700394 / DSM 18823 / ISDg) (Clostridium phytofermentans)).